A 65-amino-acid chain; its full sequence is Large ribosomal subunit protein bL35 (65 aa).

It belongs to the bacterial ribosomal protein bL35 family.

This Acaryochloris marina (strain MBIC 11017) protein is Large ribosomal subunit protein bL35.